A 901-amino-acid polypeptide reads, in one-letter code: HTH-type transcriptional regulator MalT (901 aa).

39 to 46 (SPAGYGKT) contributes to the ATP binding site. Residues 829 to 894 (ELIRTSPLTQ…DAVQHAQQLL (66 aa)) form the HTH luxR-type domain. Residues 853-872 (NEQIAGELAVAATTIKTHIR) constitute a DNA-binding region (H-T-H motif).

This sequence belongs to the MalT family. As to quaternary structure, monomer in solution. Oligomerizes to an active state in the presence of the positive effectors ATP and maltotriose.

Activated by ATP and maltotriose, which are both required for DNA binding. In terms of biological role, positively regulates the transcription of the maltose regulon whose gene products are responsible for uptake and catabolism of malto-oligosaccharides. Specifically binds to the promoter region of its target genes, recognizing a short DNA motif called the MalT box. The chain is HTH-type transcriptional regulator MalT from Salmonella typhimurium (strain LT2 / SGSC1412 / ATCC 700720).